Reading from the N-terminus, the 97-residue chain is YcgL domain-containing protein Tcr_0238 (97 aa).

A YcgL domain is found at 3–87 (LLVSAYKSAK…SEIEKMGDMP (85 aa)). The tract at residues 78 to 97 (SEIEKMGDMPPPPEHLDNIF) is disordered.

This Hydrogenovibrio crunogenus (strain DSM 25203 / XCL-2) (Thiomicrospira crunogena) protein is YcgL domain-containing protein Tcr_0238.